Here is a 391-residue protein sequence, read N- to C-terminus: Alanine racemase (391 aa).

Lys-46 serves as the catalytic Proton acceptor; specific for D-alanine. Residue Lys-46 is modified to N6-(pyridoxal phosphate)lysine. Arg-148 provides a ligand contact to substrate. The Proton acceptor; specific for L-alanine role is filled by Tyr-283. Met-331 serves as a coordination point for substrate.

Belongs to the alanine racemase family. The cofactor is pyridoxal 5'-phosphate.

It catalyses the reaction L-alanine = D-alanine. It functions in the pathway amino-acid biosynthesis; D-alanine biosynthesis; D-alanine from L-alanine: step 1/1. Functionally, catalyzes the interconversion of L-alanine and D-alanine. May also act on other amino acids. The sequence is that of Alanine racemase (alr) from Streptomyces coelicolor (strain ATCC BAA-471 / A3(2) / M145).